A 257-amino-acid chain; its full sequence is Transmembrane protein 101 (257 aa).

8 helical membrane passes run 24 to 40 (TRCP…LYAE), 52 to 72 (VPYL…MSFG), 77 to 97 (WFAL…YIGG), 110 to 130 (YSRT…AGEL), 139 to 159 (SLQS…AYSL), 182 to 202 (LFFV…YVTL), 206 to 226 (ILAV…SYWH), and 233 to 253 (FWNQ…AVIL).

It is found in the membrane. Its function is as follows. May activate NF-kappa-B signaling pathways. The sequence is that of Transmembrane protein 101 (Tmem101) from Mus musculus (Mouse).